A 441-amino-acid chain; its full sequence is Putative transporter AmpG 1 (441 aa).

12 helical membrane-spanning segments follow: residues 5-25, 42-62, 78-98, 104-124, 143-163, 171-191, 249-269, 297-317, 325-345, 352-372, 390-410, and 413-433; these read SHLL…MITG, IGIL…APIF, LSWI…FSFL, LVLF…QDTI, GIYI…AIYL, EIYK…IVAA, SGND…LVLY, VGKF…GFIM, SIFL…FLEI, LLFI…TAYI, FLSS…GYMV, and FGWQ…LLIL.

This sequence belongs to the major facilitator superfamily.

It localises to the cell inner membrane. The polypeptide is Putative transporter AmpG 1 (ampG1) (Rickettsia felis (strain ATCC VR-1525 / URRWXCal2) (Rickettsia azadi)).